The following is a 261-amino-acid chain: Cytochrome c oxidase subunit 3 (261 aa).

Over 2–15 (THQTHAYHMVNPSP) the chain is Mitochondrial matrix. A helical membrane pass occupies residues 16 to 34 (WPLTGALSALLLTSGLVMW). Over 35–40 (FHYNST) the chain is Mitochondrial intermembrane. A helical transmembrane segment spans residues 41–66 (ILLSLGLLTNILTMYQWWRDIIREGT). The Mitochondrial matrix portion of the chain corresponds to 67 to 72 (YQGHHT). Residues 73–105 (PIVQKGLRYGMILFIVSEVFFFAGFFWAFYHSS) form a helical membrane-spanning segment. Topologically, residues 106–128 (LVPTHDLGGCWPPTGITPLNPLE) are mitochondrial intermembrane. The chain crosses the membrane as a helical span at residues 129 to 152 (VPLLNTSVLLASGVSITWAHHSLM). Over 153-155 (EGN) the chain is Mitochondrial matrix. A helical membrane pass occupies residues 156-183 (RNHMNQALLITILLGLYFTILQASEYFE). Over 184–190 (TSFSISD) the chain is Mitochondrial intermembrane. A helical membrane pass occupies residues 191–223 (GIYGSTFFMATGFHGLHVIIGSTFLIVCLLRQL). The Mitochondrial matrix portion of the chain corresponds to 224–232 (KFHFTSKHH). Residues 233–256 (FGFEAAAWYWHFVDVVWLFLYVSI) traverse the membrane as a helical segment. Topologically, residues 257 to 261 (YWWGS) are mitochondrial intermembrane.

Belongs to the cytochrome c oxidase subunit 3 family. In terms of assembly, component of the cytochrome c oxidase (complex IV, CIV), a multisubunit enzyme composed of 14 subunits. The complex is composed of a catalytic core of 3 subunits MT-CO1, MT-CO2 and MT-CO3, encoded in the mitochondrial DNA, and 11 supernumerary subunits COX4I, COX5A, COX5B, COX6A, COX6B, COX6C, COX7A, COX7B, COX7C, COX8 and NDUFA4, which are encoded in the nuclear genome. The complex exists as a monomer or a dimer and forms supercomplexes (SCs) in the inner mitochondrial membrane with NADH-ubiquinone oxidoreductase (complex I, CI) and ubiquinol-cytochrome c oxidoreductase (cytochrome b-c1 complex, complex III, CIII), resulting in different assemblies (supercomplex SCI(1)III(2)IV(1) and megacomplex MCI(2)III(2)IV(2)).

Its subcellular location is the mitochondrion inner membrane. It catalyses the reaction 4 Fe(II)-[cytochrome c] + O2 + 8 H(+)(in) = 4 Fe(III)-[cytochrome c] + 2 H2O + 4 H(+)(out). Functionally, component of the cytochrome c oxidase, the last enzyme in the mitochondrial electron transport chain which drives oxidative phosphorylation. The respiratory chain contains 3 multisubunit complexes succinate dehydrogenase (complex II, CII), ubiquinol-cytochrome c oxidoreductase (cytochrome b-c1 complex, complex III, CIII) and cytochrome c oxidase (complex IV, CIV), that cooperate to transfer electrons derived from NADH and succinate to molecular oxygen, creating an electrochemical gradient over the inner membrane that drives transmembrane transport and the ATP synthase. Cytochrome c oxidase is the component of the respiratory chain that catalyzes the reduction of oxygen to water. Electrons originating from reduced cytochrome c in the intermembrane space (IMS) are transferred via the dinuclear copper A center (CU(A)) of subunit 2 and heme A of subunit 1 to the active site in subunit 1, a binuclear center (BNC) formed by heme A3 and copper B (CU(B)). The BNC reduces molecular oxygen to 2 water molecules using 4 electrons from cytochrome c in the IMS and 4 protons from the mitochondrial matrix. The polypeptide is Cytochrome c oxidase subunit 3 (Rattus norvegicus (Rat)).